Consider the following 431-residue polypeptide: Keratin, type I cytoskeletal 20 (431 aa).

Residues 1–23 form a disordered region; it reads MDFSRQSFHRSLSSSSQGPALSM. Residues 1–76 form a head region; sequence MDFSRQSFHR…SNGSDLFGGN (76 aa). Ser-13 is modified (phosphoserine; by MAPKAPK2, MAPKAPK3 and PKC). Residues Ser-16 and Ser-26 each carry the phosphoserine modification. The segment at 77–112 is coil 1A; that stretch reads GKLAMQNLNDRLANYLEKVRSLEQSNSRLEAQIKQW. Positions 77 to 388 constitute an IF rod domain; sequence GKLAMQNLND…RLLEGEDIKT (312 aa). Residues 113-130 form a linker 1 region; the sequence is YETNAPSTIRDYSSYYAQ. The coil 1B stretch occupies residues 131–222; the sequence is IKELQNQVKD…KEHQEEVEVL (92 aa). The segment at 223–245 is linker 12; the sequence is RRQLGNNVNVEVDAAPGLNLGEI. The tract at residues 246 to 384 is coil 2; sequence MNEMRQRYEV…ATYRRLLEGE (139 aa). The tail stretch occupies residues 385-431; the sequence is DIKTTEYQLSTLEMKDIKKTRKIKTVVEEVVDGKVVSSEVKEIEESV.

It belongs to the intermediate filament family. In terms of assembly, heterotetramer of two type I and two type II keratins. Associates with KRT8. Post-translationally, hyperphosphorylation at Ser-13 occurs during the early stages of apoptosis but becomes less prominent during the later stages. Phosphorylation at Ser-13 also increases in response to stress brought on by cell injury. Proteolytically cleaved by caspases during apoptosis. Cleavage occurs at Asp-235. In terms of tissue distribution, expressed at low levels in the more differentiated suprabasal regions of the small intestine, and at higher levels in the colon, mainly in the upper region and in scattered cells throughout the remaining epithelium. Also expressed in epithelial cells of bladder, ileum and stomach and at lower levels in pancreas and earskin. The phosphorylated form is nearly exclusively expressed in goblet cells of the small intestine and in the lumen-proximal cells of the colon (at protein level). Also expressed in jejunum and duodenum.

Functionally, plays a significant role in maintaining keratin filament organization in intestinal epithelia. When phosphorylated, plays a role in the secretion of mucin in the small intestine. This Mus musculus (Mouse) protein is Keratin, type I cytoskeletal 20.